Consider the following 395-residue polypeptide: Transcription termination/antitermination protein NusA (395 aa).

Residues 137 to 201 (NSVLMGQVIL…TKKGLLLELS (65 aa)) enclose the S1 motif domain. 2 KH domains span residues 243 to 291 (SHNA…TLAL) and 331 to 378 (KVRL…NESE).

This sequence belongs to the NusA family. As to quaternary structure, monomer. Binds directly to the core enzyme of the DNA-dependent RNA polymerase and to nascent RNA.

It localises to the cytoplasm. Its function is as follows. Participates in both transcription termination and antitermination. The protein is Transcription termination/antitermination protein NusA of Helicobacter pylori (strain ATCC 700392 / 26695) (Campylobacter pylori).